Here is a 398-residue protein sequence, read N- to C-terminus: Dihydroorotase (398 aa).

2 residues coordinate Zn(2+): H58 and H60. Substrate-binding positions include 60–62 (HFR) and N92. D151, H178, and H215 together coordinate Zn(2+). N256 serves as a coordination point for substrate. Position 283 (D283) interacts with Zn(2+). D283 is an active-site residue. Substrate-binding positions include H287 and 297 to 298 (PG).

The protein belongs to the metallo-dependent hydrolases superfamily. DHOase family. Class I DHOase subfamily. It depends on Zn(2+) as a cofactor.

The enzyme catalyses (S)-dihydroorotate + H2O = N-carbamoyl-L-aspartate + H(+). It functions in the pathway pyrimidine metabolism; UMP biosynthesis via de novo pathway; (S)-dihydroorotate from bicarbonate: step 3/3. Its function is as follows. Catalyzes the reversible cyclization of carbamoyl aspartate to dihydroorotate. The sequence is that of Dihydroorotase from Clostridium botulinum (strain Eklund 17B / Type B).